The following is a 618-amino-acid chain: DNA mismatch repair protein MutL (618 aa).

Positions 366 to 381 are enriched in low complexity; sequence AEPTAAREPATPRYSG. Residues 366 to 405 form a disordered region; that stretch reads AEPTAAREPATPRYSGGTSGGNGGRQSAGGWPHAQPGYQK. Positions 382–392 are enriched in gly residues; that stretch reads GTSGGNGGRQS.

This sequence belongs to the DNA mismatch repair MutL/HexB family.

In terms of biological role, this protein is involved in the repair of mismatches in DNA. It is required for dam-dependent methyl-directed DNA mismatch repair. May act as a 'molecular matchmaker', a protein that promotes the formation of a stable complex between two or more DNA-binding proteins in an ATP-dependent manner without itself being part of a final effector complex. In Salmonella agona (strain SL483), this protein is DNA mismatch repair protein MutL.